The primary structure comprises 499 residues: Cysteine--tRNA ligase (499 aa).

Residue cysteine 30 coordinates Zn(2+). The 'HIGH' region signature appears at 32–42 (PTVYDRAHLGN). Zn(2+) contacts are provided by cysteine 221, histidine 246, and glutamate 250. The 'KMSKS' region motif lies at 279–283 (KMSKS). Lysine 282 is an ATP binding site.

Belongs to the class-I aminoacyl-tRNA synthetase family. As to quaternary structure, monomer. The cofactor is Zn(2+).

The protein resides in the cytoplasm. The catalysed reaction is tRNA(Cys) + L-cysteine + ATP = L-cysteinyl-tRNA(Cys) + AMP + diphosphate. This is Cysteine--tRNA ligase from Cereibacter sphaeroides (strain ATCC 17023 / DSM 158 / JCM 6121 / CCUG 31486 / LMG 2827 / NBRC 12203 / NCIMB 8253 / ATH 2.4.1.) (Rhodobacter sphaeroides).